Reading from the N-terminus, the 201-residue chain is 3-isopropylmalate dehydratase small subunit (201 aa).

The protein belongs to the LeuD family. LeuD type 1 subfamily. In terms of assembly, heterodimer of LeuC and LeuD.

The enzyme catalyses (2R,3S)-3-isopropylmalate = (2S)-2-isopropylmalate. It participates in amino-acid biosynthesis; L-leucine biosynthesis; L-leucine from 3-methyl-2-oxobutanoate: step 2/4. In terms of biological role, catalyzes the isomerization between 2-isopropylmalate and 3-isopropylmalate, via the formation of 2-isopropylmaleate. In Nitrobacter winogradskyi (strain ATCC 25391 / DSM 10237 / CIP 104748 / NCIMB 11846 / Nb-255), this protein is 3-isopropylmalate dehydratase small subunit.